We begin with the raw amino-acid sequence, 175 residues long: Lithostathine (175 aa).

A signal peptide spans 1–26 (MLPSLGLPRLSWMLLSCLMLLSQIQG). A propeptide spanning residues 27-37 (ENSQKELPSAR) is cleaved from the precursor. Positions 38–173 (ISCPSGSMAY…NLNLPYVCKF (136 aa)) constitute a C-type lectin domain. 3 disulfides stabilise this stretch: Cys40-Cys51, Cys68-Cys171, and Cys146-Cys163.

As to quaternary structure, cleaved to give an A chain and a B chain joined by a disulfide bond. As to expression, in pancreatic acinar cells.

Its subcellular location is the secreted. Its function is as follows. Might act as an inhibitor of spontaneous calcium carbonate precipitation. This is Lithostathine (PTP) from Bos taurus (Bovine).